The following is a 182-amino-acid chain: Lipid A acyltransferase PagP (182 aa).

Residues Met-1–Ala-21 form the signal peptide. Cys-22 is lipidated: N-palmitoyl cysteine. Cys-22 carries the S-diacylglycerol cysteine lipid modification. Catalysis depends on residues His-55, Asp-98, and Ser-99.

This sequence belongs to the lipid A palmitoyltransferase family. As to quaternary structure, homodimer.

It is found in the cell outer membrane. The catalysed reaction is a lipid A + a 1,2-diacyl-sn-glycero-3-phosphocholine = a hepta-acyl lipid A + a 2-acyl-sn-glycero-3-phosphocholine. It catalyses the reaction a lipid IVA + a 1,2-diacyl-sn-glycero-3-phosphocholine = a lipid IVB + a 2-acyl-sn-glycero-3-phosphocholine. The enzyme catalyses a lipid IIA + a 1,2-diacyl-sn-glycero-3-phosphocholine = a lipid IIB + a 2-acyl-sn-glycero-3-phosphocholine. Functionally, transfers a fatty acid residue from the sn-1 position of a phospholipid to the N-linked hydroxyfatty acid chain on the proximal unit of lipid A or its precursors. Required for resistance to cationic antimicrobial peptides (CAMPs). Modifications of lipid A with an acyl chain to evade host immune defenses by resisting antibody-mediated complement lysis during respiratory infection. The polypeptide is Lipid A acyltransferase PagP (Bordetella bronchiseptica (strain ATCC BAA-588 / NCTC 13252 / RB50) (Alcaligenes bronchisepticus)).